We begin with the raw amino-acid sequence, 373 residues long: NAD(P)H-quinone oxidoreductase subunit 1 (373 aa).

The next 8 helical transmembrane spans lie at 28-48 (LLWL…GVLV), 98-118 (LLFT…WLII), 129-149 (VGVG…GLLM), 167-187 (AAQS…IVMM), 205-225 (ILSW…ICAL), 267-287 (VLSA…PIPV), 309-329 (SVGI…AILL), and 348-368 (FLLP…LAFP).

Belongs to the complex I subunit 1 family. As to quaternary structure, NDH-1 is composed of at least 11 different subunits.

The protein resides in the cellular thylakoid membrane. The catalysed reaction is a plastoquinone + NADH + (n+1) H(+)(in) = a plastoquinol + NAD(+) + n H(+)(out). It catalyses the reaction a plastoquinone + NADPH + (n+1) H(+)(in) = a plastoquinol + NADP(+) + n H(+)(out). Its function is as follows. NDH-1 shuttles electrons from an unknown electron donor, via FMN and iron-sulfur (Fe-S) centers, to quinones in the respiratory and/or the photosynthetic chain. The immediate electron acceptor for the enzyme in this species is believed to be plastoquinone. Couples the redox reaction to proton translocation, and thus conserves the redox energy in a proton gradient. This is NAD(P)H-quinone oxidoreductase subunit 1 from Parasynechococcus marenigrum (strain WH8102).